The sequence spans 347 residues: Oxygen sensor histidine kinase NreB (347 aa).

Residues Cys-59, Cys-62, Cys-74, and Cys-77 each contribute to the [4Fe-4S] cluster site. Residues 153–347 (RISRELHDGI…IVTLEVPITD (195 aa)) form the Histidine kinase domain. Position 159 is a phosphohistidine; by autocatalysis (His-159).

The cofactor is [4Fe-4S] cluster. In terms of processing, autophosphorylated.

The protein resides in the cytoplasm. The enzyme catalyses ATP + protein L-histidine = ADP + protein N-phospho-L-histidine.. Its activity is regulated as follows. Activated by cysteine desulfurase, Fe(2+) ions and cysteine and inhibited by oxygen and ADP. Its function is as follows. Member of the two-component regulatory system NreB/NreC involved in the control of dissimilatory nitrate/nitrite reduction in response to oxygen. NreB functions as a direct oxygen sensor histidine kinase which is autophosphorylated, in the absence of oxygen, probably at the conserved histidine residue, and transfers its phosphate group probably to a conserved aspartate residue of NreC. NreB/NreC activates the expression of the nitrate (narGHJI) and nitrite (nir) reductase operons, as well as the putative nitrate transporter gene narT. The sequence is that of Oxygen sensor histidine kinase NreB (nreB) from Staphylococcus carnosus (strain TM300).